Consider the following 218-residue polypeptide: Fibroblast growth factor 15 (218 aa).

Positions 1 to 25 (MARKWNGRAVARALVLATLWLAVSG) are cleaved as a signal peptide.

It belongs to the heparin-binding growth factors family. In terms of assembly, interacts with MALRD1. As to expression, expressed in the developing brain.

The protein localises to the secreted. In terms of biological role, involved in the suppression of bile acid biosynthesis through down-regulation of CYP7A1 expression. The polypeptide is Fibroblast growth factor 15 (Fgf15) (Mus musculus (Mouse)).